The primary structure comprises 286 residues: NADPH-dependent 7-cyano-7-deazaguanine reductase (286 aa).

92 to 94 (IES) lines the substrate pocket. 94–95 (SK) lines the NADPH pocket. Cys-194 acts as the Thioimide intermediate in catalysis. Asp-201 (proton donor) is an active-site residue. 233–234 (HE) contacts substrate. 262–263 (RG) contributes to the NADPH binding site.

It belongs to the GTP cyclohydrolase I family. QueF type 2 subfamily. In terms of assembly, homodimer.

It is found in the cytoplasm. It carries out the reaction 7-aminomethyl-7-carbaguanine + 2 NADP(+) = 7-cyano-7-deazaguanine + 2 NADPH + 3 H(+). Its pathway is tRNA modification; tRNA-queuosine biosynthesis. Catalyzes the NADPH-dependent reduction of 7-cyano-7-deazaguanine (preQ0) to 7-aminomethyl-7-deazaguanine (preQ1). The protein is NADPH-dependent 7-cyano-7-deazaguanine reductase of Shewanella sp. (strain MR-7).